Here is a 256-residue protein sequence, read N- to C-terminus: Ribonuclease 3 (256 aa).

The RNase III domain occupies 3-125 (LDALQQRLGY…IVGAVFLDAG (123 aa)). A Mg(2+)-binding site is contributed by Glu38. Asp42 is an active-site residue. Residues Asp111 and Glu114 each coordinate Mg(2+). Glu114 is an active-site residue. Positions 152–222 (DAKTLLQEYL…AKLALDEVQK (71 aa)) constitute a DRBM domain. Residues 229-256 (KRSRAERTGKTRKQPVPPDPQLSLRLKE) are disordered.

It belongs to the ribonuclease III family. Homodimer. Requires Mg(2+) as cofactor.

It is found in the cytoplasm. The enzyme catalyses Endonucleolytic cleavage to 5'-phosphomonoester.. In terms of biological role, digests double-stranded RNA. Involved in the processing of primary rRNA transcript to yield the immediate precursors to the large and small rRNAs (23S and 16S). Processes some mRNAs, and tRNAs when they are encoded in the rRNA operon. Processes pre-crRNA and tracrRNA of type II CRISPR loci if present in the organism. The chain is Ribonuclease 3 from Cupriavidus pinatubonensis (strain JMP 134 / LMG 1197) (Cupriavidus necator (strain JMP 134)).